We begin with the raw amino-acid sequence, 810 residues long: Actin-regulating kinase PRK1 (810 aa).

A Protein kinase domain is found at 22–298; it reads AKIIKYLTSG…CQVLEEVSRL (277 aa). Residues 28–36 and lysine 56 each bind ATP; that span reads LTSGGFAQV. Aspartate 158 acts as the Proton acceptor in catalysis. Residues serine 402, serine 428, and serine 484 each carry the phosphoserine modification. 2 disordered regions span residues 552–668 and 733–761; these read FTGN…NVNI and GVLDIKTKSNGKDKSRPPRPPPKPLHLRT. Phosphothreonine is present on threonine 553. Residues 553-566 show a composition bias toward polar residues; it reads TGNSVNNSRSASFD. Serine 556 bears the Phosphoserine mark. A compositionally biased stretch (low complexity) spans 567–588; it reads NNNVNGNGNNTNRRLVSSSTSS. Basic and acidic residues-rich tracts occupy residues 594 to 612 and 622 to 639; these read SDTKRKEESDKNQRLEKRR and FDQHERNNSRTGSRDYYR. The segment covering 645–658 has biased composition (low complexity); it reads KKTQASAKTTSKPT. The span at 733 to 748 shows a compositional bias: basic and acidic residues; it reads GVLDIKTKSNGKDKSR. An interaction with SH3 domain of ABP1 region spans residues 743-756; that stretch reads GKDKSRPPRPPPKP.

It belongs to the protein kinase superfamily. Ser/Thr protein kinase family. Interacts with ABP1, which is required for proper actin patch localization.

Its subcellular location is the cytoplasm. The protein localises to the cytoskeleton. The protein resides in the actin patch. The enzyme catalyses L-seryl-[protein] + ATP = O-phospho-L-seryl-[protein] + ADP + H(+). It catalyses the reaction L-threonyl-[protein] + ATP = O-phospho-L-threonyl-[protein] + ADP + H(+). Protein kinase involved in the regulation of actin cytoskeleton organization and endocytosis. Phosphorylates PAN1 which disrupts the interaction between PAN1 and END3, and between PAN1 and SLA1. Phosphorylates SCD5. Preferentially, phosphorylates substrates on threonine residues in a [L/I/V/M]-x-x-[Q/N/T/S]-x-T-G motif. The sequence is that of Actin-regulating kinase PRK1 (PRK1) from Saccharomyces cerevisiae (strain ATCC 204508 / S288c) (Baker's yeast).